Here is a 163-residue protein sequence, read N- to C-terminus: Lipoprotein signal peptidase (163 aa).

3 consecutive transmembrane segments (helical) span residues S4–L24, L66–W86, and D92–I112. Catalysis depends on residues D122 and D140. A helical membrane pass occupies residues S132–L152.

The protein belongs to the peptidase A8 family.

The protein resides in the cell inner membrane. It carries out the reaction Release of signal peptides from bacterial membrane prolipoproteins. Hydrolyzes -Xaa-Yaa-Zaa-|-(S,diacylglyceryl)Cys-, in which Xaa is hydrophobic (preferably Leu), and Yaa (Ala or Ser) and Zaa (Gly or Ala) have small, neutral side chains.. The protein operates within protein modification; lipoprotein biosynthesis (signal peptide cleavage). Functionally, this protein specifically catalyzes the removal of signal peptides from prolipoproteins. The protein is Lipoprotein signal peptidase of Allorhizobium ampelinum (strain ATCC BAA-846 / DSM 112012 / S4) (Agrobacterium vitis (strain S4)).